The primary structure comprises 81 residues: Small ribosomal subunit protein uS15 (81 aa).

Belongs to the universal ribosomal protein uS15 family. In terms of assembly, part of the 30S ribosomal subunit. Forms a bridge to the 50S subunit in the 70S ribosome, contacting the 23S rRNA.

One of the primary rRNA binding proteins, it binds directly to 16S rRNA where it helps nucleate assembly of the platform of the 30S subunit by binding and bridging several RNA helices of the 16S rRNA. Its function is as follows. Forms an intersubunit bridge (bridge B4) with the 23S rRNA of the 50S subunit in the ribosome. In Mesomycoplasma hyorhinis (Mycoplasma hyorhinis), this protein is Small ribosomal subunit protein uS15.